Consider the following 306-residue polypeptide: Pantothenate kinase (306 aa).

Residue 91-98 (GSVAVGKS) participates in ATP binding.

The protein belongs to the prokaryotic pantothenate kinase family.

It is found in the cytoplasm. It catalyses the reaction (R)-pantothenate + ATP = (R)-4'-phosphopantothenate + ADP + H(+). The protein operates within cofactor biosynthesis; coenzyme A biosynthesis; CoA from (R)-pantothenate: step 1/5. The protein is Pantothenate kinase of Streptococcus agalactiae serotype Ia (strain ATCC 27591 / A909 / CDC SS700).